The primary structure comprises 276 residues: Hydroxymethylpyrimidine/phosphomethylpyrimidine kinase (276 aa).

Gln-45 contributes to the 4-amino-5-hydroxymethyl-2-methylpyrimidine binding site.

It belongs to the ThiD family.

It carries out the reaction 4-amino-5-hydroxymethyl-2-methylpyrimidine + ATP = 4-amino-2-methyl-5-(phosphooxymethyl)pyrimidine + ADP + H(+). It catalyses the reaction 4-amino-2-methyl-5-(phosphooxymethyl)pyrimidine + ATP = 4-amino-2-methyl-5-(diphosphooxymethyl)pyrimidine + ADP. It functions in the pathway cofactor biosynthesis; thiamine diphosphate biosynthesis; 4-amino-2-methyl-5-diphosphomethylpyrimidine from 5-amino-1-(5-phospho-D-ribosyl)imidazole: step 2/3. The protein operates within cofactor biosynthesis; thiamine diphosphate biosynthesis; 4-amino-2-methyl-5-diphosphomethylpyrimidine from 5-amino-1-(5-phospho-D-ribosyl)imidazole: step 3/3. Functionally, catalyzes the phosphorylation of hydroxymethylpyrimidine phosphate (HMP-P) to HMP-PP, and of HMP to HMP-P. This is Hydroxymethylpyrimidine/phosphomethylpyrimidine kinase (thiD) from Staphylococcus aureus (strain Mu50 / ATCC 700699).